The sequence spans 555 residues: Dihydroxy-acid dehydratase (555 aa).

Asp-78 contacts Mg(2+). Position 119 (Cys-119) interacts with [2Fe-2S] cluster. Mg(2+)-binding residues include Asp-120 and Lys-121. N6-carboxylysine is present on Lys-121. Cys-195 contacts [2Fe-2S] cluster. Glu-444 lines the Mg(2+) pocket. The Proton acceptor role is filled by Ser-470.

Belongs to the IlvD/Edd family. In terms of assembly, homodimer. It depends on [2Fe-2S] cluster as a cofactor. Mg(2+) serves as cofactor.

The catalysed reaction is (2R)-2,3-dihydroxy-3-methylbutanoate = 3-methyl-2-oxobutanoate + H2O. It carries out the reaction (2R,3R)-2,3-dihydroxy-3-methylpentanoate = (S)-3-methyl-2-oxopentanoate + H2O. It participates in amino-acid biosynthesis; L-isoleucine biosynthesis; L-isoleucine from 2-oxobutanoate: step 3/4. Its pathway is amino-acid biosynthesis; L-valine biosynthesis; L-valine from pyruvate: step 3/4. In terms of biological role, functions in the biosynthesis of branched-chain amino acids. Catalyzes the dehydration of (2R,3R)-2,3-dihydroxy-3-methylpentanoate (2,3-dihydroxy-3-methylvalerate) into 2-oxo-3-methylpentanoate (2-oxo-3-methylvalerate) and of (2R)-2,3-dihydroxy-3-methylbutanoate (2,3-dihydroxyisovalerate) into 2-oxo-3-methylbutanoate (2-oxoisovalerate), the penultimate precursor to L-isoleucine and L-valine, respectively. The protein is Dihydroxy-acid dehydratase of Dehalococcoides mccartyi (strain ATCC BAA-2266 / KCTC 15142 / 195) (Dehalococcoides ethenogenes (strain 195)).